The following is a 140-amino-acid chain: Histone H2B.1, sperm (140 aa).

A disordered region spans residues 1-47 (MPSQRSPTKRSPTKRSPQKGAGKGGKGSKRGGKARRRGGAAVRRRRR). 3 short sequence motifs (SPKK motif) span residues 6–9 (SPTK), 11–14 (SPTK), and 16–19 (SPQK). Composition is skewed to basic residues over residues 7 to 17 (PTKRSPTKRSP) and 26 to 47 (KGSKRGGKARRRGGAAVRRRRR). A phosphoserine mark is found at Ser-11 and Ser-16. A glycan (O-linked (GlcNAc) serine) is linked at Ser-127. A Glycyl lysine isopeptide (Lys-Gly) (interchain with G-Cter in ubiquitin) cross-link involves residue Lys-135.

Belongs to the histone H2B family. As to quaternary structure, the nucleosome is a histone octamer containing two molecules each of H2A, H2B, H3 and H4 assembled in one H3-H4 heterotetramer and two H2A-H2B heterodimers. The octamer wraps approximately 147 bp of DNA. In terms of processing, monoubiquitination of Lys-135 gives a specific tag for epigenetic transcriptional activation and is also prerequisite for histone H3 'Lys-4' and 'Lys-79' methylation. Post-translationally, phosphorylated on SPKK motifs 2 and 3; which may regulate DNA binding. Dephosphorylated during maturation of spermatids to mature sperm and rephosphorylated at fertilization. GlcNAcylation at Ser-127 promotes monoubiquitination of Lys-135. It fluctuates in response to extracellular glucose, and associates with transcribed genes.

Its subcellular location is the nucleus. It localises to the chromosome. Functionally, core component of nucleosome. Nucleosomes wrap and compact DNA into chromatin, limiting DNA accessibility to the cellular machineries which require DNA as a template. Histones thereby play a central role in transcription regulation, DNA repair, DNA replication and chromosomal stability. DNA accessibility is regulated via a complex set of post-translational modifications of histones, also called histone code, and nucleosome remodeling. This Strongylocentrotus purpuratus (Purple sea urchin) protein is Histone H2B.1, sperm.